The chain runs to 797 residues: Protocadherin beta-11 (797 aa).

The signal sequence occupies residues 1 to 26; sequence MENGGTRTQQIRQVLLLFVLLGMSQA. Over 27 to 690 the chain is Extracellular; it reads GSETWSFSVA…AQTDFLTVYL (664 aa). Cadherin domains lie at 35–133, 138–242, 247–347, 352–451, and 456–561; these read VAEE…SPIF, MLLE…SPEF, YEVK…APEI, ITSP…APTF, and YTLF…SPFV. Residues asparagine 418, asparagine 436, asparagine 487, and asparagine 567 are each glycosylated (N-linked (GlcNAc...) asparagine). One can recognise a Cadherin 6 domain in the interval 568-671; sequence GSAPCTELVP…LVDGFSQPFL (104 aa). The chain crosses the membrane as a helical span at residues 691–711; the sequence is VVALASVSSLFFFSVLLFVAV. Residues 712–797 lie on the Cytoplasmic side of the membrane; sequence RLCRRSRAAS…TFQNSFGFNF (86 aa).

It is found in the cell membrane. Potential calcium-dependent cell-adhesion protein. May be involved in the establishment and maintenance of specific neuronal connections in the brain. The protein is Protocadherin beta-11 (PCDHB11) of Pan troglodytes (Chimpanzee).